A 77-amino-acid polypeptide reads, in one-letter code: Putative sulfur carrier protein YedF (77 aa).

The active-site Cysteine persulfide intermediate is Cys17.

The protein belongs to the sulfur carrier protein TusA family.

This Escherichia coli O157:H7 protein is Putative sulfur carrier protein YedF (yedF).